Here is a 609-residue protein sequence, read N- to C-terminus: MPDYRSKTSTHGRNMAGARGLWRATGMKDEDFGKPIIAVVNSFTQFVPGHVHLKDLGQLVAAEIQAAGGVAKEFNTIAVDDGIAMGHDGMLYSLPSRDLIADSVEYMVNAHCADAMVCISNCDKITPGMLMAAMRLNIPVVFVSGGPMEAGKVKFRGDEKAIDLVDAMVVAADDSYTDEEVAEFERSACPTCGSCSGMFTANSMNCLTEALGLSLPGNGSIVATHANRKKLFLKAGQLIVELAKRYYEQNDASILPRSIATKAAFKNAMTLDIAMGGSTNTVLHLLAAANEAEVDFTMDDIDELSRRVPVLSKVAPAKQDVHMEDVHRAGGIMAILGELDRANLLDVSVPTVHEKTLKDALDKWDIIRTEDPDVYEFYRSSPGGVPTQVAFSQNRYYSTLDGDREKGVIRNAEHAFSKDGGLAVLYGNIALDGCIVKTAGVDESILKFTGSARVFESQDAAVEAILGNEIKAGDVVIIRYEGPRGGPGMQEMLYPTSYLKSKGLGKDCALVTDGRFSGGSSGLSIGHVSPEAAEGGAIGLVEDGDTIEIDIPNRTIHLNIDDATLAHRRTVQEAKGWHPKEERKRKVSKALKVYAMHTTSAAKGAVRVL.

Aspartate 81 contacts Mg(2+). Residue cysteine 122 coordinates [2Fe-2S] cluster. Positions 123 and 124 each coordinate Mg(2+). Lysine 124 is subject to N6-carboxylysine. A [2Fe-2S] cluster-binding site is contributed by cysteine 195. Residue glutamate 491 coordinates Mg(2+). Serine 517 (proton acceptor) is an active-site residue.

This sequence belongs to the IlvD/Edd family. Homodimer. Requires [2Fe-2S] cluster as cofactor. Mg(2+) is required as a cofactor.

The catalysed reaction is (2R)-2,3-dihydroxy-3-methylbutanoate = 3-methyl-2-oxobutanoate + H2O. The enzyme catalyses (2R,3R)-2,3-dihydroxy-3-methylpentanoate = (S)-3-methyl-2-oxopentanoate + H2O. The protein operates within amino-acid biosynthesis; L-isoleucine biosynthesis; L-isoleucine from 2-oxobutanoate: step 3/4. It participates in amino-acid biosynthesis; L-valine biosynthesis; L-valine from pyruvate: step 3/4. Functionally, functions in the biosynthesis of branched-chain amino acids. Catalyzes the dehydration of (2R,3R)-2,3-dihydroxy-3-methylpentanoate (2,3-dihydroxy-3-methylvalerate) into 2-oxo-3-methylpentanoate (2-oxo-3-methylvalerate) and of (2R)-2,3-dihydroxy-3-methylbutanoate (2,3-dihydroxyisovalerate) into 2-oxo-3-methylbutanoate (2-oxoisovalerate), the penultimate precursor to L-isoleucine and L-valine, respectively. The polypeptide is Dihydroxy-acid dehydratase (Acinetobacter baumannii (strain AB307-0294)).